Consider the following 360-residue polypeptide: Membrane-bound lytic murein transglycosylase C (360 aa).

An N-terminal signal peptide occupies residues 1–16 (MKKLLALAVIAPLLIS). C17 carries N-palmitoyl cysteine lipidation. C17 carries S-diacylglycerol cysteine lipidation.

It belongs to the transglycosylase Slt family.

The protein localises to the cell outer membrane. The enzyme catalyses Exolytic cleavage of the (1-&gt;4)-beta-glycosidic linkage between N-acetylmuramic acid (MurNAc) and N-acetylglucosamine (GlcNAc) residues in peptidoglycan, from either the reducing or the non-reducing ends of the peptidoglycan chains, with concomitant formation of a 1,6-anhydrobond in the MurNAc residue.. Functionally, murein-degrading enzyme. May play a role in recycling of muropeptides during cell elongation and/or cell division. The sequence is that of Membrane-bound lytic murein transglycosylase C from Salmonella paratyphi A (strain ATCC 9150 / SARB42).